A 278-amino-acid polypeptide reads, in one-letter code: Large ribosomal subunit protein uL2 (278 aa).

Positions 223–278 (GSVMNPNDHPHGGGEGKAPIGHPSPMSPWGKKTLGKKTRDHKAKSEKFIVRHRRAK) are disordered. Basic residues predominate over residues 255 to 264 (TLGKKTRDHK).

Belongs to the universal ribosomal protein uL2 family. As to quaternary structure, part of the 50S ribosomal subunit. Forms a bridge to the 30S subunit in the 70S ribosome.

One of the primary rRNA binding proteins. Required for association of the 30S and 50S subunits to form the 70S ribosome, for tRNA binding and peptide bond formation. It has been suggested to have peptidyltransferase activity; this is somewhat controversial. Makes several contacts with the 16S rRNA in the 70S ribosome. This Lacticaseibacillus paracasei (strain ATCC 334 / BCRC 17002 / CCUG 31169 / CIP 107868 / KCTC 3260 / NRRL B-441) (Lactobacillus paracasei) protein is Large ribosomal subunit protein uL2.